Reading from the N-terminus, the 172-residue chain is Large ribosomal subunit protein uL10 (172 aa).

This sequence belongs to the universal ribosomal protein uL10 family. Part of the ribosomal stalk of the 50S ribosomal subunit. The N-terminus interacts with L11 and the large rRNA to form the base of the stalk. The C-terminus forms an elongated spine to which L12 dimers bind in a sequential fashion forming a multimeric L10(L12)X complex.

In terms of biological role, forms part of the ribosomal stalk, playing a central role in the interaction of the ribosome with GTP-bound translation factors. The sequence is that of Large ribosomal subunit protein uL10 from Brucella abortus (strain S19).